We begin with the raw amino-acid sequence, 192 residues long: 7-methyl-GTP pyrophosphatase (192 aa).

The Proton acceptor role is filled by Asp-69.

This sequence belongs to the Maf family. YceF subfamily. A divalent metal cation serves as cofactor.

It is found in the cytoplasm. The catalysed reaction is N(7)-methyl-GTP + H2O = N(7)-methyl-GMP + diphosphate + H(+). Its function is as follows. Nucleoside triphosphate pyrophosphatase that hydrolyzes 7-methyl-GTP (m(7)GTP). May have a dual role in cell division arrest and in preventing the incorporation of modified nucleotides into cellular nucleic acids. The chain is 7-methyl-GTP pyrophosphatase from Methylobacillus flagellatus (strain ATCC 51484 / DSM 6875 / VKM B-1610 / KT).